A 346-amino-acid chain; its full sequence is B3 domain-containing protein At5g60142 (346 aa).

The segment at residues 13–109 (PKFFKVYLPD…CFNFCIYGRA (97 aa)) is a DNA-binding region (TF-B3). 2 disordered regions span residues 158-179 (QDYN…ADND) and 192-243 (TSSE…HDRQ). Acidic residues predominate over residues 192-217 (TSSEDIIVIDDDDDDDDQDYGDDDHA). The span at 218 to 229 (DVEKERWRGVKT) shows a compositional bias: basic and acidic residues.

The protein resides in the nucleus. This is B3 domain-containing protein At5g60142 from Arabidopsis thaliana (Mouse-ear cress).